A 607-amino-acid polypeptide reads, in one-letter code: ATP-dependent zinc metalloprotease FtsH 2 (607 aa).

Residues 1 to 2 (MR) are Cytoplasmic-facing. A helical membrane pass occupies residues 3–23 (SLWIVLVLVLGSALLLQVMAA). The Periplasmic portion of the chain corresponds to 24–99 (SDDRIPYARF…PYTRVADELG (76 aa)). Residues 100–120 (LPPYLWLLLPLAGLAAMGHLA) form a helical membrane-spanning segment. The Cytoplasmic segment spans residues 121–607 (SRRATTAGTI…LREMVASGEA (487 aa)). 195 to 202 (GPPGTGKT) provides a ligand contact to ATP. A Zn(2+)-binding site is contributed by H418. E419 is a catalytic residue. Residues H422 and D495 each contribute to the Zn(2+) site.

In the central section; belongs to the AAA ATPase family. It in the C-terminal section; belongs to the peptidase M41 family. As to quaternary structure, homohexamer. Requires Zn(2+) as cofactor.

The protein resides in the cell inner membrane. Its function is as follows. Acts as a processive, ATP-dependent zinc metallopeptidase for both cytoplasmic and membrane proteins. Plays a role in the quality control of integral membrane proteins. The protein is ATP-dependent zinc metalloprotease FtsH 2 of Sorangium cellulosum (strain So ce56) (Polyangium cellulosum (strain So ce56)).